The sequence spans 151 residues: Transcriptional repressor NrdR (151 aa).

Residues cysteine 3–cysteine 34 fold into a zinc finger. In terms of domain architecture, ATP-cone spans isoleucine 49–threonine 139.

This sequence belongs to the NrdR family. The cofactor is Zn(2+).

Negatively regulates transcription of bacterial ribonucleotide reductase nrd genes and operons by binding to NrdR-boxes. The sequence is that of Transcriptional repressor NrdR from Clostridium botulinum (strain ATCC 19397 / Type A).